The chain runs to 252 residues: tRNA (guanine-N(1)-)-methyltransferase (252 aa).

S-adenosyl-L-methionine is bound by residues Gly113 and 133-138 (IGDYVL).

The protein belongs to the RNA methyltransferase TrmD family. Homodimer.

Its subcellular location is the cytoplasm. The enzyme catalyses guanosine(37) in tRNA + S-adenosyl-L-methionine = N(1)-methylguanosine(37) in tRNA + S-adenosyl-L-homocysteine + H(+). Its function is as follows. Specifically methylates guanosine-37 in various tRNAs. The polypeptide is tRNA (guanine-N(1)-)-methyltransferase (Baumannia cicadellinicola subsp. Homalodisca coagulata).